We begin with the raw amino-acid sequence, 171 residues long: S-ribosylhomocysteine lyase (171 aa).

H54, H58, and C128 together coordinate Fe cation.

The protein belongs to the LuxS family. Homodimer. Fe cation is required as a cofactor.

It catalyses the reaction S-(5-deoxy-D-ribos-5-yl)-L-homocysteine = (S)-4,5-dihydroxypentane-2,3-dione + L-homocysteine. In terms of biological role, involved in the synthesis of autoinducer 2 (AI-2) which is secreted by bacteria and is used to communicate both the cell density and the metabolic potential of the environment. The regulation of gene expression in response to changes in cell density is called quorum sensing. Catalyzes the transformation of S-ribosylhomocysteine (RHC) to homocysteine (HC) and 4,5-dihydroxy-2,3-pentadione (DPD). The protein is S-ribosylhomocysteine lyase of Yersinia enterocolitica serotype O:8 / biotype 1B (strain NCTC 13174 / 8081).